We begin with the raw amino-acid sequence, 337 residues long: F420-dependent glucose-6-phosphate dehydrogenase (337 aa).

Asp40 serves as a coordination point for coenzyme F420-(gamma-Glu)n. His41 acts as the Proton donor in catalysis. Coenzyme F420-(gamma-Glu)n is bound by residues Thr77 and 108–109 (SG). The active-site Proton acceptor is the Glu110. Residues Asn113, 178 to 179 (GG), and 181 to 182 (VV) each bind coenzyme F420-(gamma-Glu)n. Residues Thr196, Lys199, Lys260, and Arg284 each contribute to the substrate site.

This sequence belongs to the F420-dependent glucose-6-phosphate dehydrogenase family. Homodimer.

It carries out the reaction oxidized coenzyme F420-(gamma-L-Glu)(n) + D-glucose 6-phosphate + H(+) = 6-phospho-D-glucono-1,5-lactone + reduced coenzyme F420-(gamma-L-Glu)(n). In terms of biological role, catalyzes the coenzyme F420-dependent oxidation of glucose 6-phosphate (G6P) to 6-phosphogluconolactone. The polypeptide is F420-dependent glucose-6-phosphate dehydrogenase (Rhodococcus erythropolis (strain PR4 / NBRC 100887)).